Consider the following 265-residue polypeptide: NAD kinase (265 aa).

The active-site Proton acceptor is aspartate 45. Residues 45 to 46 (DG), 121 to 122 (NE), arginine 147, aspartate 149, 160 to 165 (TAYSKS), alanine 184, and glutamine 222 each bind NAD(+).

Belongs to the NAD kinase family. A divalent metal cation serves as cofactor.

Its subcellular location is the cytoplasm. The enzyme catalyses NAD(+) + ATP = ADP + NADP(+) + H(+). Its function is as follows. Involved in the regulation of the intracellular balance of NAD and NADP, and is a key enzyme in the biosynthesis of NADP. Catalyzes specifically the phosphorylation on 2'-hydroxyl of the adenosine moiety of NAD to yield NADP. This chain is NAD kinase, found in Lacticaseibacillus paracasei (strain ATCC 334 / BCRC 17002 / CCUG 31169 / CIP 107868 / KCTC 3260 / NRRL B-441) (Lactobacillus paracasei).